The sequence spans 120 residues: Jacalin-related lectin 39 (120 aa).

In terms of domain architecture, Jacalin-type lectin spans 6 to 120 (SRDHADFVAH…KRTFDFGGFN (115 aa)).

It belongs to the jacalin lectin family.

The protein is Jacalin-related lectin 39 (JAL39) of Arabidopsis thaliana (Mouse-ear cress).